The sequence spans 1413 residues: MKALLDLFKQVQQEEQFDAIKIGLASPEKIRSWSYGEVKKPETINYRTFKPERDGLFCAKIFGPIKDYECLCGKYKRLKHRGVICEKCGVEVTLAKVRRERMGHIELAAPTAHIWFLKSLPSRLGMVLDMTLRDIERVLYFEAFVVLEPGMTPLKKSQIMSEDDYIAKCDEYGEGEFVAMMGAEGIRELLRGIDIEKQIEQIRAELQATGSEAKIKKFAKRLKVLEAFQRSGIKPEWMILEVLPVLPPELRPLVPLDGGRFATSDLNDLYRRVINRNNRLKRLLELKAPEIIVRNEKRMLQEAVDSLLDNGRRGKAMTGANKRPLKSLAEMIKGKGGRFRQNLLGKRVDYSGRSVIVVGPTLKLHQCGLPKLMALELFKPFIFHKLETMGIATTIKAAKKEVESQTPVVWDILEEVIREHPVMLNRAPTLHRLGIQAFEPVLIEGKAIQLHPLVCAAFNADFDGDQMAVHVPLSLEAQMEARTLMLASNNVLFPANGDPSIVPSQDVVLGLYYTTRDKINGKGEGMTFADISEVIRAYENKEVELASRVNVRITEYEVVNKDADGDARFAPKITLQATTVGRSILSEILPKGLPFSVLNKPLKKKEISRLINTAFRKCGLRETVIFADKLLQSGFRLATRAGISIAIDDMLVPPQKEKIISDAAAKVKEYDKQYMSGLVTDQERYNNVVDIWGAAGDQVGKAMMEQLQHEDVVDRTGATVKQESFNSIYMMADSGARGSAAQIRQLAGMRGLMAKPDGSIIETPITANFREGLNVLQYFISTHGARKGLADTALKTANSGYLTRRLVDVTQDLVVVEDDCGTSNGVAMKALVEGGEVIEALRDRILGRVTVADVVNPETQETAIETGTLLDEDLVELIDAIGVDEVKVRTPLSCDTRYGLCGKCYGRDLGRGVLVNSGEAVGVIAAQSIGEPGTQLTMRTFHIGGAASRAAVASSVEAKATGTVRFTATMRYVTNTKGELIVISRSGEALITDDHGRERERHKIPYGATLLVQDGQAIKAGTQLATWDALTRPIVSEYTGTTKFENVEEGVTVAKQMDEVTGLSTLVVIDAKRRTAATKGLRPQVKLLDANNQEVKIPGTDHSVTIGFQVGALITVKDGQQVHVGEVLARIPTESQKTRDITGGLPRVAELFEARSPKDAAVLAEVTGTVSFGKDTKGKQRLVITDLDGNAHEFLIAKEKQVLVHDGQVVNKGEMIVEGPADPHDILRLKGIEELAHYIVDEVQDVYRLQGVKINDKHIEVIVRQMLRRVQIADVGDTKFIPGEQVERSELLDENDRVIADGKRPATHENLLLGITKASLSTDSFISAASFQETTRVLTEAAIMGKTDDLRGLKENVIVGRLIPAGTGLAYHRARKAREAAERERAQAISDEEQSLFIEPPVVQATEGEGDAV.

Zn(2+) is bound by residues Cys-70, Cys-72, Cys-85, and Cys-88. Mg(2+) is bound by residues Asp-461, Asp-463, and Asp-465. Positions 820, 894, 901, and 904 each coordinate Zn(2+).

It belongs to the RNA polymerase beta' chain family. In terms of assembly, the RNAP catalytic core consists of 2 alpha, 1 beta, 1 beta' and 1 omega subunit. When a sigma factor is associated with the core the holoenzyme is formed, which can initiate transcription. The cofactor is Mg(2+). It depends on Zn(2+) as a cofactor.

It catalyses the reaction RNA(n) + a ribonucleoside 5'-triphosphate = RNA(n+1) + diphosphate. DNA-dependent RNA polymerase catalyzes the transcription of DNA into RNA using the four ribonucleoside triphosphates as substrates. This chain is DNA-directed RNA polymerase subunit beta', found in Cupriavidus metallidurans (strain ATCC 43123 / DSM 2839 / NBRC 102507 / CH34) (Ralstonia metallidurans).